We begin with the raw amino-acid sequence, 379 residues long: Glucose-insensitive transcription protein 7 (379 aa).

The CS domain maps to Ser-181–Val-272. The SGS domain maps to Ala-292 to Phe-379. Residues Ser-345–Phe-379 are disordered. The span at Tyr-346–Trp-358 shows a compositional bias: polar residues.

Its function is as follows. Involved in cyclic AMP (cAMP) pathway, possibly by participating in the assembly or the conformational activation of specific multiprotein complexes. The protein is Glucose-insensitive transcription protein 7 (git7) of Schizosaccharomyces pombe (strain 972 / ATCC 24843) (Fission yeast).